An 83-amino-acid chain; its full sequence is Large ribosomal subunit protein bL27 (83 aa).

Belongs to the bacterial ribosomal protein bL27 family.

The polypeptide is Large ribosomal subunit protein bL27 (Thermotoga neapolitana (strain ATCC 49049 / DSM 4359 / NBRC 107923 / NS-E)).